Here is a 907-residue protein sequence, read N- to C-terminus: Alanine--tRNA ligase (907 aa).

Residues His602, His606, Cys706, and His710 each coordinate Zn(2+).

This sequence belongs to the class-II aminoacyl-tRNA synthetase family. Zn(2+) is required as a cofactor.

It localises to the cytoplasm. It catalyses the reaction tRNA(Ala) + L-alanine + ATP = L-alanyl-tRNA(Ala) + AMP + diphosphate. Catalyzes the attachment of alanine to tRNA(Ala) in a two-step reaction: alanine is first activated by ATP to form Ala-AMP and then transferred to the acceptor end of tRNA(Ala). Also edits incorrectly charged Ser-tRNA(Ala) and Gly-tRNA(Ala) via its editing domain. This chain is Alanine--tRNA ligase, found in Thermofilum pendens (strain DSM 2475 / Hrk 5).